A 396-amino-acid polypeptide reads, in one-letter code: Elongation factor Tu (396 aa).

A tr-type G domain is found at 10-206 (KPHCNIGTIG…NVDEYIPQPE (197 aa)). The G1 stretch occupies residues 19 to 26 (GHVDHGKT). Position 19-26 (19-26 (GHVDHGKT)) interacts with GTP. Threonine 26 serves as a coordination point for Mg(2+). Positions 60 to 64 (GITIS) are G2. Positions 81–84 (DCPG) are G3. GTP is bound by residues 81-85 (DCPGH) and 136-139 (NKCD). A G4 region spans residues 136 to 139 (NKCD). Residues 174–176 (SAL) form a G5 region.

The protein belongs to the TRAFAC class translation factor GTPase superfamily. Classic translation factor GTPase family. EF-Tu/EF-1A subfamily. In terms of assembly, monomer.

The protein localises to the cytoplasm. It carries out the reaction GTP + H2O = GDP + phosphate + H(+). Its function is as follows. GTP hydrolase that promotes the GTP-dependent binding of aminoacyl-tRNA to the A-site of ribosomes during protein biosynthesis. In Bradyrhizobium sp. (strain BTAi1 / ATCC BAA-1182), this protein is Elongation factor Tu.